Consider the following 471-residue polypeptide: 3-isopropylmalate dehydratase large subunit (471 aa).

[4Fe-4S] cluster-binding residues include Cys-347, Cys-407, and Cys-410.

This sequence belongs to the aconitase/IPM isomerase family. LeuC type 1 subfamily. Heterodimer of LeuC and LeuD. Requires [4Fe-4S] cluster as cofactor.

The enzyme catalyses (2R,3S)-3-isopropylmalate = (2S)-2-isopropylmalate. Its pathway is amino-acid biosynthesis; L-leucine biosynthesis; L-leucine from 3-methyl-2-oxobutanoate: step 2/4. Functionally, catalyzes the isomerization between 2-isopropylmalate and 3-isopropylmalate, via the formation of 2-isopropylmaleate. This chain is 3-isopropylmalate dehydratase large subunit, found in Vibrio parahaemolyticus serotype O3:K6 (strain RIMD 2210633).